A 156-amino-acid polypeptide reads, in one-letter code: uncharacterized protein (156 aa).

It to L.lactis TrpF C-terminal region.

This is an uncharacterized protein from Bacillus subtilis (strain 168).